The following is a 706-amino-acid chain: MTALWLIVLCGVLSVVYAIWATSSVLSADAGSPRMQEIAAAVREGAQAYLRRQYTTIGIVGIVIFVLLVYFLGFYVAIGFAIGAILSGAAGFIGMNVSVRANVRTAQAATTSLAGGLELAFKAGAITGMLVAGLALLGVTLYFGFLVYSLKLAPDSRVVVDAMVALGFGASLISIFARLGGGIFTKGADVGGDLVGKVEAGIPEDDPRNPATIADNVGDNVGDCAGMAADLFETYAVTAVATMVLAAIFFAKTPILMSMMTLPLAIGGICIITSIIGTFFVKLGPSQSIMGALYKGLIATGVLSLIGIAVVIYTLIGFGKLDGVDYTGMSLFECGVVGLIVTALIIWITEYYTGTDYRPVKSIAAASVTGHGTNVIQGLAISMEATALPAIVIIAGILVTYSLAGLFGIAIATATMLALAGMIVALDAFGPVTDNAGGIAEMAGLPKEVRKSTDALDAVGNTTKAVTKGYAIGSAGLGALVLFAAYNQDLKFFVADSAHHTYFAGVNPDFSLNNPYVVVGLLFGGLLPYLFGAMGMTAVGRAASAIVEEVRRQFREKPGIMQGTDKPDYGKAVDLLTKAAIKEMIIPSLLPVLSPIVVYFLIYAIAGGGATGKSAAFSAVGAMLLGVIVTGLFVAISMTSGGGAWDNAKKYIEDGHYGGKGSDAHKSAVTGDTVGDPYKDTAGPAVNPMIKITNIVALLLLAILAH.

The next 5 helical transmembrane spans lie at 1 to 21 (MTAL…AIWA), 62 to 82 (IVIF…GFAI), 83 to 103 (GAIL…RANV), 128 to 148 (GMLV…FLVY), and 164 to 184 (VALG…GGIF). Lys186 provides a ligand contact to substrate. 4 residues coordinate Mg(2+): Asp189, Asp193, Asn216, and Asp219. Helical transmembrane passes span 231-251 (LFET…IFFA), 261-281 (TLPL…TFFV), 298-318 (IATG…LIGF), 328-348 (GMSL…IIWI), 376-398 (IQGL…AGIL), and 412-432 (ATAT…FGPV). Asp434 serves as a coordination point for Mg(2+). 4 helical membrane-spanning segments follow: residues 465-485 (AVTK…LFAA), 516-536 (YVVV…AMGM), 585-605 (IIPS…IYAI), and 616-636 (AFSA…FVAI). Asp646, Asp672, and Asp676 together coordinate Ca(2+). Residue Lys679 participates in substrate binding. The chain crosses the membrane as a helical span at residues 685–705 (AVNPMIKITNIVALLLLAILA).

The protein belongs to the H(+)-translocating pyrophosphatase (TC 3.A.10) family. K(+)-insensitive subfamily. As to quaternary structure, homodimer. Mg(2+) serves as cofactor.

Its subcellular location is the cell inner membrane. It catalyses the reaction diphosphate + H2O + H(+)(in) = 2 phosphate + 2 H(+)(out). In terms of biological role, proton pump that utilizes the energy of pyrophosphate hydrolysis as the driving force for proton movement across the membrane. Generates a proton motive force. The protein is K(+)-insensitive pyrophosphate-energized proton pump of Bradyrhizobium diazoefficiens (strain JCM 10833 / BCRC 13528 / IAM 13628 / NBRC 14792 / USDA 110).